The primary structure comprises 250 residues: Phosphonates import ATP-binding protein PhnC (250 aa).

The region spanning 2–247 (IVFNNVNKVW…KLDAQAMKKI (246 aa)) is the ABC transporter domain. Residue 35-42 (GLSGAGKT) coordinates ATP.

It belongs to the ABC transporter superfamily. Phosphonates importer (TC 3.A.1.9.1) family. In terms of assembly, the complex is composed of two ATP-binding proteins (PhnC), two transmembrane proteins (PhnE) and a solute-binding protein (PhnD).

The protein resides in the cell membrane. It catalyses the reaction phosphonate(out) + ATP + H2O = phosphonate(in) + ADP + phosphate + H(+). Functionally, part of the ABC transporter complex PhnCDE involved in phosphonates import. Responsible for energy coupling to the transport system. The protein is Phosphonates import ATP-binding protein PhnC of Mycoplasma mycoides subsp. mycoides SC (strain CCUG 32753 / NCTC 10114 / PG1).